A 1091-amino-acid polypeptide reads, in one-letter code: MYTPVDPKVDFVAQERRILAFWRERRVFEQSVAQRAQGKSYVFFDGPPFATGLPHFGHFVPSTIKDIIPRYQTMRGAYVPRRFGWDCHGLPIEHLIEQELNLNSKSDVESYGVSAFNAACRSSVLRYVKEWQRTLTRLGRWVDFDNDYKTMDVCYMESVWWVVAQLWQRKLLYEGYKILPYCPRCATALSNHELNLGGYQDVSDPAITVRFECTSVVPGSPAAREFCAAASWGSASLPAHTCFLAWTTTPWTLPCNAALALGPQILYVLIEANDEHYILARSRLEFYYPDSSAYRVVWEKRGEHLAGIRYRPLFSYPVFGQGPDPSVQGDSEEGLFCTRVADFVSTEDGTGVVHVAPAFGEDDYEVFKDAGISIQCPLDAECRFTAEVADYQGLFVKAADKAIIARVQKQGALFRREQISHAYPHCWRCASPLIYRAVHSWFVAVEKIKDKMLAANASICWQPSHIRDGRFGKWLVCARDWAISRDRYWGNPLPIWRCVHCGATDCIGSRTQLYERSGMLLEDLHKHVVDMVTIPCACGSVMRRVPEVLDCWFESGAMPYAQQHYPFEHATDFERYFPAHFISEGLDQTRGWFYTLTILAVALFERPAFENCIVTGLVLASDGKKMSKALRNYADPNEVMDRYGADALRLFLVRSAVVRADDLKYSDEGVKDILKTVIIPLWNSYSFYVTYANIDGIDPPVCAKVDGMGQAVTRLATHLNNPLDRWILSLTEKLVQDIACALDAYDVSKVADPIVSYVDQLNNWYIRRSRRRFWKSINDEDKRCAYNTLYCVLKRCVLAIAPVVPFITESIWQNIRAADDVQSVHLADYPVCTPMVRDDALEFKMETVQRVVSMARAIRAQCNLKVRQPLKAMQVITRNPMERSALLEMEEDVLDELNVKELVFHEKEDEIVEYRAKANFRVLGKELGSKTKRAALSIERLSSAEIQEILEGTTLYLDVDGDRLELTEEKILVQRIERESLKAINEGTLTVALDTTLTEDLLLEGAIRDLVRGVQNLRKERGFSLVDRICLRVFSSDQDIVCARKAYDLHRSYIVGETLAAHVQWARVRDGASAVYVKSDAVLWEVSIDKA.

The short motif at 48 to 58 is the 'HIGH' region element; sequence PFATGLPHFGH. The 'KMSKS' region motif lies at 625 to 629; the sequence is KMSKA. ATP is bound at residue Lys-628.

This sequence belongs to the class-I aminoacyl-tRNA synthetase family. IleS type 2 subfamily. In terms of assembly, monomer. Requires Zn(2+) as cofactor.

Its subcellular location is the cytoplasm. It carries out the reaction tRNA(Ile) + L-isoleucine + ATP = L-isoleucyl-tRNA(Ile) + AMP + diphosphate. Functionally, catalyzes the attachment of isoleucine to tRNA(Ile). As IleRS can inadvertently accommodate and process structurally similar amino acids such as valine, to avoid such errors it has two additional distinct tRNA(Ile)-dependent editing activities. One activity is designated as 'pretransfer' editing and involves the hydrolysis of activated Val-AMP. The other activity is designated 'posttransfer' editing and involves deacylation of mischarged Val-tRNA(Ile). The protein is Isoleucine--tRNA ligase of Treponema pallidum (strain Nichols).